Consider the following 311-residue polypeptide: Putative HTH-type transcriptional regulatory protein MTH_967 (311 aa).

Residues 134–192 enclose the HTH cro/C1-type domain; sequence LREVREEYNLSLKDLADLAHVSRKTIYKYENGLARASAETAMILEEILNIRITLSIDIF. The H-T-H motif DNA-binding region spans 145-164; the sequence is LKDLADLAHVSRKTIYKYEN.

The chain is Putative HTH-type transcriptional regulatory protein MTH_967 from Methanothermobacter thermautotrophicus (strain ATCC 29096 / DSM 1053 / JCM 10044 / NBRC 100330 / Delta H) (Methanobacterium thermoautotrophicum).